Here is a 666-residue protein sequence, read N- to C-terminus: Vicilin-like antimicrobial peptides 2-2 (666 aa).

An N-terminal signal peptide occupies residues 1 to 27 (MAINTSNLCSLLFLLSLFLLSTTVSLA). Disordered regions lie at residues 161-191 (QQKR…DPQQ) and 221-251 (RQHG…SDNP). The segment covering 239 to 251 (RYEEGEEKQSDNP) has biased composition (basic and acidic residues). Cupin type-1 domains are found at residues 271 to 410 (SVLE…ERLR) and 455 to 625 (YNLF…KEVE).

It belongs to the 7S seed storage protein family.

Its subcellular location is the secreted. In terms of biological role, antimicrobial peptides 2b, 2c and 2d have antibacterial and antifungal activity against a range of species. The protein is Vicilin-like antimicrobial peptides 2-2 of Macadamia integrifolia (Macadamia nut).